The following is a 152-amino-acid chain: Large ribosomal subunit protein bL9 (152 aa).

This sequence belongs to the bacterial ribosomal protein bL9 family.

In terms of biological role, binds to the 23S rRNA. The sequence is that of Large ribosomal subunit protein bL9 from Synechococcus sp. (strain CC9902).